The primary structure comprises 426 residues: 3-phosphoshikimate 1-carboxyvinyltransferase (426 aa).

3-phosphoshikimate is bound by residues K22, S23, and R27. K22 contacts phosphoenolpyruvate. Phosphoenolpyruvate-binding residues include G96 and R124. 7 residues coordinate 3-phosphoshikimate: S170, S171, Q172, S198, D314, N337, and K341. A phosphoenolpyruvate-binding site is contributed by Q172. Catalysis depends on D314, which acts as the Proton acceptor. Phosphoenolpyruvate contacts are provided by R345, R387, and K412.

Belongs to the EPSP synthase family. As to quaternary structure, monomer.

It is found in the cytoplasm. It catalyses the reaction 3-phosphoshikimate + phosphoenolpyruvate = 5-O-(1-carboxyvinyl)-3-phosphoshikimate + phosphate. The protein operates within metabolic intermediate biosynthesis; chorismate biosynthesis; chorismate from D-erythrose 4-phosphate and phosphoenolpyruvate: step 6/7. Its function is as follows. Catalyzes the transfer of the enolpyruvyl moiety of phosphoenolpyruvate (PEP) to the 5-hydroxyl of shikimate-3-phosphate (S3P) to produce enolpyruvyl shikimate-3-phosphate and inorganic phosphate. This Shewanella baltica (strain OS185) protein is 3-phosphoshikimate 1-carboxyvinyltransferase.